Here is a 477-residue protein sequence, read N- to C-terminus: Alanine--glyoxylate aminotransferase 2 homolog 2, mitochondrial (477 aa).

The transit peptide at 1–22 (MQRFAAKRSVQNISVSLWRRCI) directs the protein to the mitochondrion. Residues 165–166 (GT), Tyr192, and 292–295 (DEVQ) each bind pyridoxal 5'-phosphate. Lys321 bears the N6-(pyridoxal phosphate)lysine mark. Residue Thr350 coordinates pyridoxal 5'-phosphate.

Belongs to the class-III pyridoxal-phosphate-dependent aminotransferase family. In terms of assembly, homotetramer. Interacts with GRF3. The cofactor is pyridoxal 5'-phosphate.

It is found in the mitochondrion. The enzyme catalyses glyoxylate + L-alanine = glycine + pyruvate. The protein is Alanine--glyoxylate aminotransferase 2 homolog 2, mitochondrial (AGT3) of Arabidopsis thaliana (Mouse-ear cress).